Here is a 73-residue protein sequence, read N- to C-terminus: uncharacterized protein (73 aa).

The interval 48 to 73 (AKEPEKKTPSMEAKATSLSPNKASAS) is disordered. Positions 63–73 (TSLSPNKASAS) are enriched in polar residues.

This is an uncharacterized protein from Saccharomyces cerevisiae (strain ATCC 204508 / S288c) (Baker's yeast).